A 519-amino-acid polypeptide reads, in one-letter code: Histidine ammonia-lyase (519 aa).

Positions 146–148 (ASG) form a cross-link, 5-imidazolinone (Ala-Gly). At S147 the chain carries 2,3-didehydroalanine (Ser).

The protein belongs to the PAL/histidase family. Post-translationally, contains an active site 4-methylidene-imidazol-5-one (MIO), which is formed autocatalytically by cyclization and dehydration of residues Ala-Ser-Gly.

The protein localises to the cytoplasm. It catalyses the reaction L-histidine = trans-urocanate + NH4(+). Its pathway is amino-acid degradation; L-histidine degradation into L-glutamate; N-formimidoyl-L-glutamate from L-histidine: step 1/3. The polypeptide is Histidine ammonia-lyase (Psychrobacter sp. (strain PRwf-1)).